The following is a 355-amino-acid chain: Blue-sensitive opsin (355 aa).

At 1 to 36 (MNGTEGINFYVPLSNKTGLVRSPFEYPQYYLAEPWK) the chain is on the extracellular side. N-linked (GlcNAc...) asparagine glycosylation is found at asparagine 2 and asparagine 15. A helical membrane pass occupies residues 37-61 (YKVVCCYIFFLIFTGLPINILTLLV). Residues 62-73 (TFKHKKLRQPLN) are Cytoplasmic-facing. Residues 74-98 (YILVNLAVADLFMACFGFTVTFYTA) traverse the membrane as a helical segment. Topologically, residues 99–113 (WNGYFIFGPIGCAIE) are extracellular. A disulfide bridge connects residues cysteine 110 and cysteine 187. A helical transmembrane segment spans residues 114 to 133 (GFFATLGGQVALWSLVVLAI). Over 134–152 (ERYIVVCKPMGNFRFSATH) the chain is Cytoplasmic. A helical transmembrane segment spans residues 153–176 (ALMGISFTWFMSFSCAAPPLLGWS). At 177 to 202 (RYIPEGMQCSCGPDYYTLNPDYHNES) the chain is on the extracellular side. Asparagine 200 carries an N-linked (GlcNAc...) asparagine glycan. A helical transmembrane segment spans residues 203–230 (YVLYMFGVHFVIPVVVIFFSYGRLICKV). Residues 231–252 (REAAAQQQESASTQKAEREVTR) lie on the Cytoplasmic side of the membrane. The chain crosses the membrane as a helical span at residues 253 to 276 (MVILMVLGFLLAWTPYAMVAFWIF). Residues 277-284 (TNKGVDFS) are Extracellular-facing. The chain crosses the membrane as a helical span at residues 285–309 (ATLMSVPAFFSKSSSLYNPIIYVLM). Lysine 296 is modified (N6-(retinylidene)lysine). The Cytoplasmic portion of the chain corresponds to 310–355 (NKQFRNCMITTICCGKNPFGDEDVSSSVSQSKTEVSSVSSSQVSPA). Residues cysteine 322 and cysteine 323 are each lipidated (S-palmitoyl cysteine). A disordered region spans residues 332-355 (DVSSSVSQSKTEVSSVSSSQVSPA). Positions 334–355 (SSSVSQSKTEVSSVSSSQVSPA) are enriched in low complexity.

The protein belongs to the G-protein coupled receptor 1 family. Opsin subfamily. Phosphorylated on some or all of the serine and threonine residues present in the C-terminal region.

It localises to the membrane. Its function is as follows. Visual pigments are the light-absorbing molecules that mediate vision. They consist of an apoprotein, opsin, covalently linked to cis-retinal. This opsin uses a vitamin A2 chromophore. This Anolis carolinensis (Green anole) protein is Blue-sensitive opsin.